The following is an 86-amino-acid chain: Small ribosomal subunit protein bS20 (86 aa).

Residues 1–25 (MANIKSQIKRIRTNEKARQRNKAYK) form a disordered region. Residues 12-25 (RTNEKARQRNKAYK) are compositionally biased toward basic and acidic residues.

The protein belongs to the bacterial ribosomal protein bS20 family.

In terms of biological role, binds directly to 16S ribosomal RNA. This is Small ribosomal subunit protein bS20 from Beutenbergia cavernae (strain ATCC BAA-8 / DSM 12333 / CCUG 43141 / JCM 11478 / NBRC 16432 / NCIMB 13614 / HKI 0122).